The primary structure comprises 1101 residues: ATP-citrate synthase (1101 aa).

One can recognise an ATP-grasp domain in the interval 4-265; it reads KAISEQTGKE…LDAKSGASLK (262 aa). The ATP site is built by Lys58, Arg66, Gly67, Pro109, Val111, and Glu118. Tyr131 bears the Phosphotyrosine mark. ATP is bound at residue Asp216. Mg(2+) is bound by residues Asp257, Ser260, and Ala262. Ser263 carries the phosphoserine modification. Citrate is bound by residues Gly309, Asn346, Thr348, Tyr364, and Arg379. Positions 441–457 are enriched in low complexity; it reads ASGSTSTPAPSRTASFS. A disordered region spans residues 441–487; it reads ASGSTSTPAPSRTASFSESRADEVAPAKKAKPAMPQDSVPSPRSLQG. Residue Thr447 is modified to Phosphothreonine. Position 451 is a phosphoserine (Ser451). Ser455 bears the Phosphoserine; by PKA and PKB/AKT1 or PKB/AKT2 or BCKDK mark. A phosphoserine mark is found at Ser459 and Ser481. The span at 478 to 487 shows a compositional bias: polar residues; the sequence is SVPSPRSLQG. 3 positions are modified to N6-acetyllysine; alternate: Lys540, Lys546, and Lys554. Glycyl lysine isopeptide (Lys-Gly) (interchain with G-Cter in ubiquitin); alternate cross-links involve residues Lys540, Lys546, and Lys554. Thr639 is subject to Phosphothreonine. Residue Ser663 is modified to Phosphoserine. Tyr682 carries the phosphotyrosine modification. The active-site Tele-phosphohistidine intermediate is the His760. CoA is bound at residue 779-789; it reads LKEAGVFVPRS. Phosphoserine is present on Ser839. Lys948, Lys968, Lys978, and Lys1077 each carry N6-acetyllysine. A Phosphoserine modification is found at Ser1100.

This sequence in the N-terminal section; belongs to the succinate/malate CoA ligase beta subunit family. In the C-terminal section; belongs to the succinate/malate CoA ligase alpha subunit family. As to quaternary structure, homotetramer. The cofactor is Mg(2+). Post-translationally, phosphorylated by PKA and GSK3 in a sequential manner; phosphorylation results in activation of its activity. Phosphorylation on Thr-447 and Ser-451 depends on the phosphorylation state of Ser-455. Phosphorylation on Ser-455 is decreased by prior phosphorylation on the other 2 residues. Phosphorylated at Ser-455 by BCKDK and dephosphorylated by protein phosphatase PPM1K. In terms of processing, ISGylated. Acetylated at Lys-540, Lys-546 and Lys-554 by KAT2B/PCAF. Acetylation is promoted by glucose and stabilizes the protein, probably by preventing ubiquitination at the same sites. Acetylation promotes de novo lipid synthesis. Deacetylated by SIRT2. Post-translationally, ubiquitinated at Lys-540, Lys-546 and Lys-554 by the BCR(KLHL25) E3 ubiquitin ligase complex and UBR4, leading to its degradation. Ubiquitination is probably inhibited by acetylation at same site. BCR(KLHL25)-mediated degradation of ACLY promotes fatty acid oxidation and is required for differentiation of inducible regulatory T (iTreg) cells.

The protein resides in the cytoplasm. Its subcellular location is the cytosol. The enzyme catalyses oxaloacetate + acetyl-CoA + ADP + phosphate = citrate + ATP + CoA. Phosphorylation results in activation of its activity. Glucose 6-phosphate, fructose 6-phosphate, fructose 2,6-bisphosphate, ribulose 5-phosphate, and fructose 1,6-bisphosphate also act as activators. Its function is as follows. Catalyzes the cleavage of citrate into oxaloacetate and acetyl-CoA, the latter serving as common substrate in multiple biochemical reactions in protein, carbohydrate and lipid metabolism. This Homo sapiens (Human) protein is ATP-citrate synthase (ACLY).